The chain runs to 201 residues: Small ribosomal subunit protein uS4c (201 aa).

Positions 15 to 43 (LGALPGLTNKRPRAGSDLRNQSRSGKRSQ) are disordered. The S4 RNA-binding domain maps to 89-149 (MRLDNILFRL…DEQKSIALIQ (61 aa)).

Component of the chloroplast small ribosomal subunit (SSU). Mature 70S chloroplast ribosomes of higher plants consist of a small (30S) and a large (50S) subunit. The 30S small subunit contains 1 molecule of ribosomal RNA (16S rRNA) and 24 different proteins. The 50S large subunit contains 3 rRNA molecules (23S, 5S and 4.5S rRNA) and 33 different proteins.

Its subcellular location is the plastid. It is found in the chloroplast. In terms of biological role, component of the chloroplast ribosome (chloro-ribosome), a dedicated translation machinery responsible for the synthesis of chloroplast genome-encoded proteins, including proteins of the transcription and translation machinery and components of the photosynthetic apparatus. The protein is Small ribosomal subunit protein uS4c (rps4) of Spinacia oleracea (Spinach).